The sequence spans 26 residues: Photosystem II stability/assembly factor HCF136, chloroplastic (26 aa).

The protein belongs to the Ycf48 family.

It localises to the plastid. It is found in the chloroplast thylakoid lumen. Its function is as follows. Essential for photosystem II (PSII) biogenesis; required for assembly of an early intermediate in PSII assembly that includes D2 (psbD) and cytochrome b559. The chain is Photosystem II stability/assembly factor HCF136, chloroplastic from Populus euphratica (Euphrates poplar).